The following is a 249-amino-acid chain: UPF0246 protein Lreu_0493 (249 aa).

Belongs to the UPF0246 family.

This Limosilactobacillus reuteri (strain DSM 20016) (Lactobacillus reuteri) protein is UPF0246 protein Lreu_0493.